The sequence spans 220 residues: Deoxyribose-phosphate aldolase (220 aa).

Catalysis depends on Asp-89, which acts as the Proton donor/acceptor. Catalysis depends on Lys-151, which acts as the Schiff-base intermediate with acetaldehyde. The active-site Proton donor/acceptor is the Lys-180.

This sequence belongs to the DeoC/FbaB aldolase family. DeoC type 1 subfamily.

Its subcellular location is the cytoplasm. It carries out the reaction 2-deoxy-D-ribose 5-phosphate = D-glyceraldehyde 3-phosphate + acetaldehyde. It functions in the pathway carbohydrate degradation; 2-deoxy-D-ribose 1-phosphate degradation; D-glyceraldehyde 3-phosphate and acetaldehyde from 2-deoxy-alpha-D-ribose 1-phosphate: step 2/2. Functionally, catalyzes a reversible aldol reaction between acetaldehyde and D-glyceraldehyde 3-phosphate to generate 2-deoxy-D-ribose 5-phosphate. The protein is Deoxyribose-phosphate aldolase of Lactococcus lactis subsp. cremoris (strain SK11).